Consider the following 186-residue polypeptide: Large ribosomal subunit protein uL5 (186 aa).

Belongs to the universal ribosomal protein uL5 family. As to quaternary structure, part of the 50S ribosomal subunit; part of the 5S rRNA/L5/L18/L25 subcomplex. Contacts the 5S rRNA and the P site tRNA. Forms a bridge to the 30S subunit in the 70S ribosome.

This is one of the proteins that bind and probably mediate the attachment of the 5S RNA into the large ribosomal subunit, where it forms part of the central protuberance. In the 70S ribosome it contacts protein S13 of the 30S subunit (bridge B1b), connecting the 2 subunits; this bridge is implicated in subunit movement. Contacts the P site tRNA; the 5S rRNA and some of its associated proteins might help stabilize positioning of ribosome-bound tRNAs. This is Large ribosomal subunit protein uL5 from Cereibacter sphaeroides (strain ATCC 17029 / ATH 2.4.9) (Rhodobacter sphaeroides).